The sequence spans 873 residues: DNA mismatch repair protein MutS (873 aa).

An ATP-binding site is contributed by 601–608 (GPNMSGKS).

The protein belongs to the DNA mismatch repair MutS family.

Its function is as follows. This protein is involved in the repair of mismatches in DNA. It is possible that it carries out the mismatch recognition step. This protein has a weak ATPase activity. This chain is DNA mismatch repair protein MutS, found in Staphylococcus epidermidis (strain ATCC 12228 / FDA PCI 1200).